The primary structure comprises 428 residues: Nuclear hormone receptor family member nhr-44 (428 aa).

A DNA-binding region (nuclear receptor) is located at residues 21–98; it reads SEKCLVCFQP…LGMKPDNIQR (78 aa). 2 consecutive NR C4-type zinc fingers follow at residues 24 to 44 and 61 to 86; these read CLVC…CRAC and CREG…SDKC. The NR LBD domain occupies 181-427; that stretch reads SLEQLAFGLQ…LSHPEMFQFS (247 aa).

Belongs to the nuclear hormone receptor family.

The protein localises to the nucleus. Its function is as follows. Orphan nuclear receptor. This is Nuclear hormone receptor family member nhr-44 (nhr-44) from Caenorhabditis elegans.